Consider the following 586-residue polypeptide: Heterogeneous nuclear ribonucleoprotein L (586 aa).

Residues 1–16 are compositionally biased toward basic residues; sequence MSRRLLPRAEKRRRRL. The segment at 1 to 97 is disordered; it reads MSRRLLPRAE…NYDDPHKTPA (97 aa). Residues 17 to 27 are compositionally biased toward basic and acidic residues; the sequence is EQRQQPDEQLR. Low complexity predominate over residues 28–37; that stretch reads RAGAMVKMAA. Residues 38–54 are compositionally biased toward gly residues; it reads AGGGGGGGRYYGGGNEG. Glycyl lysine isopeptide (Lys-Gly) (interchain with G-Cter in SUMO2) cross-links involve residues Lys59 and Lys62. Residues 69 to 87 show a composition bias toward gly residues; the sequence is QHGGGGGGGSGAAGGGGGE. Ser98 is subject to Phosphoserine. Residues 99-173 form the RRM 1 domain; it reads PVVHIRGLID…HPAFVNYSTS (75 aa). Lys133 participates in a covalent cross-link: Glycyl lysine isopeptide (Lys-Gly) (interchain with G-Cter in SUMO2). Ser182 is modified (phosphoserine). The RRM 2 domain maps to 190-267; that stretch reads SVLLFTILNP…CTLKIEYAKP (78 aa). An N6-acetyllysine modification is found at Lys266. Residues 281 to 298 show a composition bias toward polar residues; that stretch reads DYTNPNLSGQGDPGSNPN. The interval 281-376 is disordered; that stretch reads DYTNPNLSGQ…PPPPDYGPHA (96 aa). Residues Ser288 and Ser295 each carry the phosphoserine modification. Residue Lys299 forms a Glycyl lysine isopeptide (Lys-Gly) (interchain with G-Cter in SUMO2) linkage. Asymmetric dimethylarginine occurs at positions 351 and 355. Residues 361 to 372 are compositionally biased toward pro residues; the sequence is GHPPPPPPPPDY. Phosphoserine is present on Ser378. RRM domains lie at 379–476 and 492–580; these read PVLM…DFSE and RIQH…LCFS. Ser541 carries the post-translational modification Phosphoserine; by CaMK4. Lys565 is covalently cross-linked (Glycyl lysine isopeptide (Lys-Gly) (interchain with G-Cter in SUMO2)).

In terms of assembly, identified in a IGF2BP1-dependent mRNP granule complex containing untranslated mRNAs. Interacts with HNRNPLL. Interacts with APEX1; the interaction is DNA-dependent. Component of a complex with SETD2. Interacts with ELAVL1. Part of a transcription inhibitory ribonucleoprotein complex composed at least of the circular RNA circZNF827, ZNF827 and HNRNPK. Interacts with CHD8 in an RNA-dependent manner. Phosphorylation at Ser-541 by CaMK4 enhances interaction with a CaMK4-responsive RNA element (CaRRE1), and prevents inclusion of the stress axis-regulated exon (STREX) of the KCNMA1 potassium channel transcripts upon membrane depolarization. In terms of tissue distribution, detected in hematopoietic cells, including lymphoid progenitor cells.

It localises to the nucleus. It is found in the nucleoplasm. Its subcellular location is the cytoplasm. In terms of biological role, splicing factor binding to exonic or intronic sites and acting as either an activator or repressor of exon inclusion. Exhibits a binding preference for CA-rich elements. Component of the heterogeneous nuclear ribonucleoprotein (hnRNP) complexes and associated with most nascent transcripts. Associates, together with APEX1, to the negative calcium responsive element (nCaRE) B2 of the APEX2 promoter. As part of a ribonucleoprotein complex composed at least of ZNF827, HNRNPK and the circular RNA circZNF827 that nucleates the complex on chromatin, may negatively regulate the transcription of genes involved in neuronal differentiation. Regulates alternative splicing of a core group of genes involved in neuronal differentiation, likely by mediating H3K36me3-coupled transcription elongation and co-transcriptional RNA processing via interaction with CHD8. The protein is Heterogeneous nuclear ribonucleoprotein L (Hnrnpl) of Mus musculus (Mouse).